We begin with the raw amino-acid sequence, 416 residues long: L-lysine 2,3-aminomutase (416 aa).

The region spanning H111 to Y322 is the Radical SAM core domain. [4Fe-4S] cluster-binding residues include C125, C129, and C132. Zn(2+) is bound at residue C268. Residue K337 is modified to N6-(pyridoxal phosphate)lysine. Zn(2+)-binding residues include C375, C377, and C380.

The protein belongs to the radical SAM superfamily. KamA family. In terms of assembly, homohexamer; trimer of dimers. Forms a homotetramer in crystal. The cofactor is [4Fe-4S] cluster. It depends on pyridoxal 5'-phosphate as a cofactor. Co(2+) serves as cofactor. Requires Zn(2+) as cofactor.

The catalysed reaction is L-lysine = (3S)-3,6-diaminohexanoate. It functions in the pathway amino-acid degradation; L-lysine degradation via acetate pathway. Its activity is regulated as follows. The enzyme is activated by S-adenosyl-methionine. Activity is dependent on the levels of Fe(2+), S(2-) and Co(2+). Activity is stimulated by addition of EDTA. S-adenosylhomocysteine competitively inhibits the activity whereas 5'-methylthioadenosine is not inhibitory in the presence of S-adenosylmethionine. Competitively inhibited by 4-thialysine. Inhibited by sodium borohydride (1 mM) when added with 2 mM dithionate. Moderately inhibited by beta-mercaptoethanol (30 mM) along with dithionate. Higher concentrations of Fe(2+) partially inhibit the activity and Co(2+) at 1 mM is a strong inhibitor. Hydroxylamine, isonicotinic acid hydrazide inhibit effectively, in addition, hydrazine, D-penicillamine and D-cycloserine are also inhibitory at high concentrations. Functionally, catalyzes the interconversion of L-alpha-lysine and L-beta-lysine. This Clostridium subterminale protein is L-lysine 2,3-aminomutase (kamA).